Consider the following 359-residue polypeptide: Membrane-bound lytic murein transglycosylase C (359 aa).

The first 16 residues, 1–16, serve as a signal peptide directing secretion; sequence MKKYLALALIAPLLIS. Cys17 carries the N-palmitoyl cysteine lipid modification. Cys17 carries S-diacylglycerol cysteine lipidation.

This sequence belongs to the transglycosylase Slt family.

It is found in the cell outer membrane. The enzyme catalyses Exolytic cleavage of the (1-&gt;4)-beta-glycosidic linkage between N-acetylmuramic acid (MurNAc) and N-acetylglucosamine (GlcNAc) residues in peptidoglycan, from either the reducing or the non-reducing ends of the peptidoglycan chains, with concomitant formation of a 1,6-anhydrobond in the MurNAc residue.. Murein-degrading enzyme. May play a role in recycling of muropeptides during cell elongation and/or cell division. The protein is Membrane-bound lytic murein transglycosylase C of Escherichia coli (strain SMS-3-5 / SECEC).